The primary structure comprises 299 residues: Probable lipid kinase YegS (299 aa).

Residues 2–133 (ANFPASLLIL…IDMARVNDKT (132 aa)) enclose the DAGKc domain. Residues threonine 40, 66–72 (GDGTINE), and threonine 95 each bind ATP. The Mg(2+) site is built by leucine 215, aspartate 218, and leucine 220. Glutamate 271 acts as the Proton acceptor in catalysis.

It belongs to the diacylglycerol/lipid kinase family. YegS lipid kinase subfamily. It depends on Mg(2+) as a cofactor. The cofactor is Ca(2+).

The protein resides in the cytoplasm. Probably phosphorylates lipids; the in vivo substrate is unknown. The sequence is that of Probable lipid kinase YegS from Salmonella agona (strain SL483).